Consider the following 144-residue polypeptide: Maximins 7/H1 (144 aa).

Residues 1 to 18 (MNFKYIVAVSFLIASAYA) form the signal peptide. The propeptide occupies 19 to 43 (RSEENDEQSLSQRDVLEEESLREIR). Position 70 is an asparagine amide (N70). A propeptide spanning residues 74–123 (TAEDHEVMKRLEAVMRDLDSLDYPEEAAERETRGFNQEEIANLFTKKEKR) is cleaved from the precursor. Leucine amide is present on L143.

This sequence belongs to the bombinin family. Expressed by the skin glands.

The protein localises to the secreted. Functionally, maximin-7 shows antimicrobial activity against bacteria and against the fungus C.albicans. It has little hemolytic activity. In terms of biological role, maximin-H1 shows antibacterial activity against both Gram-positive and Gram-negative bacteria. It also shows antimicrobial activity against the fungus C.albicans. Shows strong hemolytic activity. This chain is Maximins 7/H1, found in Bombina maxima (Giant fire-bellied toad).